The following is a 20-amino-acid chain: Mite allergen Der p 6 (20 aa).

Positions 1 to 20 (AIGXQPAAEAEAPFQISLMK) constitute a Peptidase S1 domain.

Belongs to the peptidase S1 family.

It localises to the secreted. Protease that shows specificity similar to chymotrypsin. This chain is Mite allergen Der p 6 (DERP6), found in Dermatophagoides pteronyssinus (European house dust mite).